Consider the following 335-residue polypeptide: DNA-directed RNA polymerase subunit alpha (335 aa).

Positions 1 to 233 (MMLNATEFLT…QQISIFVDLE (233 aa)) are alpha N-terminal domain (alpha-NTD). The segment at 247–335 (VDPVLLRPVD…VDDRFSYRSR (89 aa)) is alpha C-terminal domain (alpha-CTD).

It belongs to the RNA polymerase alpha chain family. As to quaternary structure, homodimer. The RNAP catalytic core consists of 2 alpha, 1 beta, 1 beta' and 1 omega subunit. When a sigma factor is associated with the core the holoenzyme is formed, which can initiate transcription.

The catalysed reaction is RNA(n) + a ribonucleoside 5'-triphosphate = RNA(n+1) + diphosphate. Functionally, DNA-dependent RNA polymerase catalyzes the transcription of DNA into RNA using the four ribonucleoside triphosphates as substrates. In Psychrobacter sp. (strain PRwf-1), this protein is DNA-directed RNA polymerase subunit alpha.